The primary structure comprises 481 residues: 3-ketoacyl-CoA synthase 8 (481 aa).

2 helical membrane-spanning segments follow: residues 4–24 (LKMVFFKILFISLMAGLAMKG) and 44–64 (LQTISLLLFLVVFVWILYMLT). The 298-residue stretch at 61 to 358 (YMLTRPKPVY…FFITFVKKKY (298 aa)) folds into the FAE domain. Active-site residues include Cys-213, His-292, His-376, His-380, His-409, and Asn-413.

This sequence belongs to the thiolase-like superfamily. Chalcone/stilbene synthases family. Expressed in leaves and seedlings.

It is found in the endoplasmic reticulum membrane. The enzyme catalyses a very-long-chain acyl-CoA + malonyl-CoA + H(+) = a very-long-chain 3-oxoacyl-CoA + CO2 + CoA. It participates in lipid metabolism; fatty acid biosynthesis. The chain is 3-ketoacyl-CoA synthase 8 from Arabidopsis thaliana (Mouse-ear cress).